A 91-amino-acid chain; its full sequence is Small ribosomal subunit protein uS19 (91 aa).

Belongs to the universal ribosomal protein uS19 family.

Functionally, protein S19 forms a complex with S13 that binds strongly to the 16S ribosomal RNA. The polypeptide is Small ribosomal subunit protein uS19 (Amoebophilus asiaticus (strain 5a2)).